The primary structure comprises 67 residues: uncharacterized protein (67 aa).

This is an uncharacterized protein from Thermoproteus tenax virus 1 (strain KRA1) (TTV1).